A 206-amino-acid chain; its full sequence is Large ribosomal subunit protein uL4 (206 aa).

It belongs to the universal ribosomal protein uL4 family. Part of the 50S ribosomal subunit.

Its function is as follows. One of the primary rRNA binding proteins, this protein initially binds near the 5'-end of the 23S rRNA. It is important during the early stages of 50S assembly. It makes multiple contacts with different domains of the 23S rRNA in the assembled 50S subunit and ribosome. In terms of biological role, forms part of the polypeptide exit tunnel. This Rhodopseudomonas palustris (strain BisA53) protein is Large ribosomal subunit protein uL4.